Consider the following 438-residue polypeptide: Mannan endo-1,4-beta-mannosidase F (438 aa).

A signal peptide spans 1–17 (MHPLPSVALLSAIGAVA). The CBM1 domain maps to 19 to 54 (QVGPWGQCGGRSYTGETSCVSGWSCVLFNEWYSQCQ). Positions 60–96 (STSSVSATAAPSSTSSSKESVPSATTSKKPVPTGSSS) are ser-rich linker. Low complexity predominate over residues 61–86 (TSSVSATAAPSSTSSSKESVPSATTS). The disordered stretch occupies residues 61–92 (TSSVSATAAPSSTSSSKESVPSATTSKKPVPT). The segment at 97–438 (FVKADGLKFN…CGVADHLSTL (342 aa)) is catalytic. Residues Trp149 and Asn263 each coordinate substrate. Residue Glu264 is the Proton donor of the active site. N-linked (GlcNAc...) asparagine glycosylation occurs at Asn277. A substrate-binding site is contributed by Tyr339. Residue Glu373 is the Nucleophile of the active site. Trp402 lines the substrate pocket.

This sequence belongs to the glycosyl hydrolase 5 (cellulase A) family.

It is found in the secreted. The enzyme catalyses Random hydrolysis of (1-&gt;4)-beta-D-mannosidic linkages in mannans, galactomannans and glucomannans.. Endo-1,4-mannanase, a crucial enzyme for depolymerization of seed galactomannans and wood galactoglucomannans. The protein is Mannan endo-1,4-beta-mannosidase F (manF) of Aspergillus fumigatus (strain ATCC MYA-4609 / CBS 101355 / FGSC A1100 / Af293) (Neosartorya fumigata).